A 115-amino-acid polypeptide reads, in one-letter code: Large ribosomal subunit protein bL20 (115 aa).

The protein belongs to the bacterial ribosomal protein bL20 family.

In terms of biological role, binds directly to 23S ribosomal RNA and is necessary for the in vitro assembly process of the 50S ribosomal subunit. It is not involved in the protein synthesizing functions of that subunit. This Mycoplasmoides gallisepticum (strain R(low / passage 15 / clone 2)) (Mycoplasma gallisepticum) protein is Large ribosomal subunit protein bL20.